The chain runs to 92 residues: uncharacterized protein (92 aa).

Residues 24 to 89 enclose the HMA domain; that stretch reads KQIVLKVKEM…AIHKLKYTAE (66 aa). Residues cysteine 35 and cysteine 38 each coordinate a metal cation.

This is an uncharacterized protein from Haemophilus influenzae (strain ATCC 51907 / DSM 11121 / KW20 / Rd).